Here is a 323-residue protein sequence, read N- to C-terminus: tRNA U34 carboxymethyltransferase (323 aa).

Carboxy-S-adenosyl-L-methionine is bound by residues Lys-91, Trp-105, Lys-110, Gly-130, 152–154, 181–182, Met-196, Tyr-200, and Arg-315; these read DPT and IE.

It belongs to the class I-like SAM-binding methyltransferase superfamily. CmoB family. Homotetramer.

The enzyme catalyses carboxy-S-adenosyl-L-methionine + 5-hydroxyuridine(34) in tRNA = 5-carboxymethoxyuridine(34) in tRNA + S-adenosyl-L-homocysteine + H(+). Functionally, catalyzes carboxymethyl transfer from carboxy-S-adenosyl-L-methionine (Cx-SAM) to 5-hydroxyuridine (ho5U) to form 5-carboxymethoxyuridine (cmo5U) at position 34 in tRNAs. In Escherichia coli (strain K12 / MC4100 / BW2952), this protein is tRNA U34 carboxymethyltransferase.